Consider the following 93-residue polypeptide: Long neurotoxin 2 (93 aa).

Positions M1–T21 are cleaved as a signal peptide. Cystine bridges form between C24–C42, C35–C63, C48–C52, C67–C78, and C79–C84.

It belongs to the three-finger toxin family. Long-chain subfamily. Type II alpha-neurotoxin sub-subfamily. In terms of tissue distribution, expressed by the venom gland.

Its subcellular location is the secreted. Binds with high affinity to muscular (alpha-1/CHRNA1) and neuronal (alpha-7/CHRNA7) nicotinic acetylcholine receptor (nAChR) and inhibits acetylcholine from binding to the receptor, thereby impairing neuromuscular and neuronal transmission. The chain is Long neurotoxin 2 from Hydrophis hardwickii (Hardwick's spine-bellied seasnake).